We begin with the raw amino-acid sequence, 120 residues long: U3-hexatoxin-Hi1a (120 aa).

Residues 1–19 (MKLLYFFVVITVLVAVAAA) form the signal peptide. Residues 20–51 (LPAKTEEQIAAEENQLVEDLVQYAGTRLTRKR) constitute a propeptide that is removed on maturation.

The protein belongs to the neurotoxin 25 family. F7 subfamily. Contains 4 disulfide bonds. As to expression, expressed by the venom gland.

It is found in the secreted. In terms of biological role, weak insecticidal toxin with probable ion channel impairing activity. In vivo, induces paralysis when injected into sheep blowflies (L.cuprina). Shows weak toxicity, since it is only toxic at high doses, and flies recover within 24 hours. The chain is U3-hexatoxin-Hi1a from Hadronyche infensa (Fraser island funnel-web spider).